We begin with the raw amino-acid sequence, 533 residues long: Receptor homology region, transmembrane domain- and RING domain-containing protein 1 (533 aa).

A signal peptide spans 1–26; that stretch reads MNRRRTMLLLICLCATFCLMTQLGAA. The Lumenal segment spans residues 27 to 167; that stretch reads NVVLMGTNLT…LPAFENSAWS (141 aa). An N-linked (GlcNAc...) asparagine glycan is attached at Asn-34. Cys-68 and Cys-91 form a disulfide bridge. The 62-residue stretch at 84–145 folds into the PA domain; the sequence is ALIIRGGCTF…ISKASGEVLK (62 aa). Residues 168–188 traverse the membrane as a helical segment; it reads IMAISFISLLAMSAVLATCFF. The Cytoplasmic portion of the chain corresponds to 189 to 533; it reads VRRHHIRRDR…MASAQSLPGC (345 aa). Residues 236–278 form an RING-type; atypical zinc finger; sequence CAICLEDYNVGEKLRVLPCRHKFHAACVDLWLTTWRTFCPVCK. Disordered regions lie at residues 309-329 and 440-476; these read SFRSSVAASPPRPISRRPSSQ and LRRCGESGPSLSTMAPQSPQQSQLRHGGESDLNLAGA. Residues 448 to 463 show a composition bias toward polar residues; it reads PSLSTMAPQSPQQSQL.

The protein localises to the prevacuolar compartment membrane. It localises to the protein storage vacuole membrane. It is found in the golgi apparatus membrane. In terms of biological role, involved in the trafficking of vacuolar proteins. Functions probably as a sorting receptor for protein trafficking to the protein storage vacuole (PSV) by binding the C-terminal vacuolar sorting determinant (VSD) of vacuolar-sorted proteins. This Oryza sativa subsp. japonica (Rice) protein is Receptor homology region, transmembrane domain- and RING domain-containing protein 1.